We begin with the raw amino-acid sequence, 230 residues long: dITP/XTP pyrophosphatase (230 aa).

Residue 7 to 12 participates in substrate binding; sequence STNPGK. 2 residues coordinate Mg(2+): glutamate 41 and aspartate 70. The active-site Proton acceptor is the aspartate 70. Residues serine 71, 181-184, lysine 205, and 210-211 each bind substrate; these read FGYD and HR.

It belongs to the HAM1 NTPase family. As to quaternary structure, homodimer. Requires Mg(2+) as cofactor.

It carries out the reaction XTP + H2O = XMP + diphosphate + H(+). The enzyme catalyses dITP + H2O = dIMP + diphosphate + H(+). The catalysed reaction is ITP + H2O = IMP + diphosphate + H(+). Pyrophosphatase that catalyzes the hydrolysis of nucleoside triphosphates to their monophosphate derivatives, with a high preference for the non-canonical purine nucleotides XTP (xanthosine triphosphate), dITP (deoxyinosine triphosphate) and ITP. Seems to function as a house-cleaning enzyme that removes non-canonical purine nucleotides from the nucleotide pool, thus preventing their incorporation into DNA/RNA and avoiding chromosomal lesions. This chain is dITP/XTP pyrophosphatase, found in Anaeromyxobacter sp. (strain Fw109-5).